Here is a 118-residue protein sequence, read N- to C-terminus: Small ribosomal subunit protein uS13 (118 aa).

Residues 94–118 (GLPVRGQRTKTNARTRKGPRKPIKK) form a disordered region.

It belongs to the universal ribosomal protein uS13 family. Part of the 30S ribosomal subunit. Forms a loose heterodimer with protein S19. Forms two bridges to the 50S subunit in the 70S ribosome.

In terms of biological role, located at the top of the head of the 30S subunit, it contacts several helices of the 16S rRNA. In the 70S ribosome it contacts the 23S rRNA (bridge B1a) and protein L5 of the 50S subunit (bridge B1b), connecting the 2 subunits; these bridges are implicated in subunit movement. Contacts the tRNAs in the A and P-sites. This Klebsiella pneumoniae (strain 342) protein is Small ribosomal subunit protein uS13.